We begin with the raw amino-acid sequence, 156 residues long: Transcription antitermination protein NusB (156 aa).

This sequence belongs to the NusB family.

Involved in transcription antitermination. Required for transcription of ribosomal RNA (rRNA) genes. Binds specifically to the boxA antiterminator sequence of the ribosomal RNA (rrn) operons. In Rickettsia akari (strain Hartford), this protein is Transcription antitermination protein NusB.